A 50-amino-acid chain; its full sequence is MTQTVKNFGRGANECKRCGRKQGLVRKYGIYLCRHCFREIAHDMGFEKYS.

Zn(2+) is bound by residues cysteine 15, cysteine 18, cysteine 33, and cysteine 36.

It belongs to the universal ribosomal protein uS14 family. Zinc-binding uS14 subfamily. Part of the 30S ribosomal subunit. Zn(2+) serves as cofactor.

Functionally, binds 16S rRNA, required for the assembly of 30S particles. This Methanococcoides burtonii (strain DSM 6242 / NBRC 107633 / OCM 468 / ACE-M) protein is Small ribosomal subunit protein uS14.